The chain runs to 313 residues: Pyrimidine-specific ribonucleoside hydrolase RihB (313 aa).

The active-site Proton acceptor is D11. Residues D11, D16, and V124 each contribute to the Ca(2+) site. Substrate contacts are provided by Q227 and H239. D240 lines the Ca(2+) pocket.

The protein belongs to the IUNH family. RihB subfamily. As to quaternary structure, homotetramer. The cofactor is Ca(2+).

It carries out the reaction a pyrimidine ribonucleoside + H2O = a pyrimidine nucleobase + D-ribose. Functionally, hydrolyzes cytidine or uridine to ribose and cytosine or uracil, respectively. Has a clear preference for cytidine over uridine. Strictly specific for ribonucleosides. The sequence is that of Pyrimidine-specific ribonucleoside hydrolase RihB from Escherichia coli (strain K12 / DH10B).